Consider the following 45-residue polypeptide: Putative UPF0377 protein YJL222W-B (45 aa).

The protein belongs to the UPF0377 family.

In Saccharomyces cerevisiae (strain ATCC 204508 / S288c) (Baker's yeast), this protein is Putative UPF0377 protein YJL222W-B.